We begin with the raw amino-acid sequence, 390 residues long: 5-hydroxytryptamine receptor 1B (390 aa).

The Extracellular portion of the chain corresponds to 1–46; that stretch reads MEEPGAQCAPPPPAGSETWVPQANLSSAPSQNCSAKDYIYQDSISL. N-linked (GlcNAc...) asparagine glycans are attached at residues asparagine 24 and asparagine 32. A helical transmembrane segment spans residues 47 to 72; it reads PWKVLLVMLLALITLATTLSNAFVIA. At 73–86 the chain is on the cytoplasmic side; that stretch reads TVYRTRKLHTPANY. Residues 87 to 111 traverse the membrane as a helical segment; it reads LIASLAVTDLLVSILVMPISTMYTV. The Extracellular portion of the chain corresponds to 112 to 119; that stretch reads TGRWTLGQ. The chain crosses the membrane as a helical span at residues 120-145; that stretch reads VVCDFWLSSDITCCTASILHLCVIAL. A disulfide bridge links cysteine 122 with cysteine 199. Ergotamine-binding residues include aspartate 129 and threonine 134. The DRY motif; important for ligand-induced conformation changes and signaling motif lies at 146 to 148; that stretch reads DRY. The Cytoplasmic segment spans residues 146-165; the sequence is DRYWAITDAVEYSAKRTPKR. The chain crosses the membrane as a helical span at residues 166–184; sequence AAVMIALVWVFSISISLPP. Topologically, residues 185–205 are extracellular; that stretch reads FFWRQAKAEEEVSECVVNTDH. Residue valine 201 coordinates ergotamine. Residues 206 to 229 form a helical membrane-spanning segment; sequence ILYTVYSTVGAFYFPTLLLIALYG. Residues 230-315 are Cytoplasmic-facing; that stretch reads RIYVEARSRI…AARERKATKT (86 aa). A compositionally biased stretch (polar residues) spans 259-272; it reads DSPGSTSSVTSINS. Residues 259 to 281 are disordered; that stretch reads DSPGSTSSVTSINSRVPDVPSES. A helical transmembrane segment spans residues 316 to 337; that stretch reads LGIILGAFIVCWLPFFIISLVM. The Extracellular segment spans residues 338-347; sequence PICKDACWFH. Residues 348–370 form a helical membrane-spanning segment; sequence LAIFDFFTWLGYLNSLINPIIYT. The short motif at 365–369 is the NPxxY motif; important for ligand-induced conformation changes and signaling element; that stretch reads NPIIY. Residues 371–390 are Cytoplasmic-facing; sequence MSNEDFKQAFHKLIRFKCTS. Cysteine 388 carries the S-palmitoyl cysteine lipid modification.

It belongs to the G-protein coupled receptor 1 family. In terms of assembly, homodimer. Heterodimer with HTR1D. Post-translationally, phosphorylated. Desensitization of the receptor may be mediated by its phosphorylation. In terms of processing, palmitoylated. As to expression, detected in cerebral artery smooth muscle cells (at protein level). Detected in brain cortex, striatum, amygdala, medulla, hippocampus, caudate nucleus and putamen.

It localises to the cell membrane. Functionally, G-protein coupled receptor for 5-hydroxytryptamine (serotonin). Also functions as a receptor for ergot alkaloid derivatives, various anxiolytic and antidepressant drugs and other psychoactive substances, such as lysergic acid diethylamide (LSD). Ligand binding causes a conformation change that triggers signaling via guanine nucleotide-binding proteins (G proteins) and modulates the activity of downstream effectors, such as adenylate cyclase. HTR1B is coupled to G(i)/G(o) G alpha proteins and mediates inhibitory neurotransmission by inhibiting adenylate cyclase activity. Arrestin family members inhibit signaling via G proteins and mediate activation of alternative signaling pathways. Regulates the release of 5-hydroxytryptamine, dopamine and acetylcholine in the brain, and thereby affects neural activity, nociceptive processing, pain perception, mood and behavior. Besides, plays a role in vasoconstriction of cerebral arteries. The chain is 5-hydroxytryptamine receptor 1B from Homo sapiens (Human).